Consider the following 177-residue polypeptide: Large ribosomal subunit protein uL6 (177 aa).

Belongs to the universal ribosomal protein uL6 family. Part of the 50S ribosomal subunit.

This protein binds to the 23S rRNA, and is important in its secondary structure. It is located near the subunit interface in the base of the L7/L12 stalk, and near the tRNA binding site of the peptidyltransferase center. This is Large ribosomal subunit protein uL6 from Albidiferax ferrireducens (strain ATCC BAA-621 / DSM 15236 / T118) (Rhodoferax ferrireducens).